The following is a 320-amino-acid chain: Malate dehydrogenase (320 aa).

NAD(+) is bound by residues 10 to 15 and aspartate 34; that span reads GSGMIG. Residues arginine 83 and arginine 89 each contribute to the substrate site. NAD(+)-binding positions include asparagine 96 and 119-121; that span reads ITN. Substrate contacts are provided by asparagine 121 and arginine 152. Histidine 176 functions as the Proton acceptor in the catalytic mechanism.

This sequence belongs to the LDH/MDH superfamily. MDH type 3 family.

It catalyses the reaction (S)-malate + NAD(+) = oxaloacetate + NADH + H(+). In terms of biological role, catalyzes the reversible oxidation of malate to oxaloacetate. This chain is Malate dehydrogenase, found in Maricaulis maris (strain MCS10) (Caulobacter maris).